A 430-amino-acid polypeptide reads, in one-letter code: GTPase Obg (430 aa).

The region spanning 1 to 158 (MFVDQVKISL…LDVSLELKLL (158 aa)) is the Obg domain. The tract at residues 118-145 (KGGRGGRGNSRFATPRNPAPDFSEKGEP) is disordered. Positions 159-329 (ADVGLVGFPS…LLYAIADKLE (171 aa)) constitute an OBG-type G domain. Residues 165–172 (GFPSVGKS), 190–194 (FTTIK), 212–215 (DLPG), 282–285 (NKMD), and 310–312 (STI) contribute to the GTP site. Mg(2+) is bound by residues S172 and T192. In terms of domain architecture, OCT spans 352-430 (KHTPSQDKFT…ILGGEFEFVE (79 aa)).

It belongs to the TRAFAC class OBG-HflX-like GTPase superfamily. OBG GTPase family. As to quaternary structure, monomer. Mg(2+) is required as a cofactor.

It localises to the cytoplasm. Its function is as follows. An essential GTPase which binds GTP, GDP and possibly (p)ppGpp with moderate affinity, with high nucleotide exchange rates and a fairly low GTP hydrolysis rate. Plays a role in control of the cell cycle, stress response, ribosome biogenesis and in those bacteria that undergo differentiation, in morphogenesis control. This is GTPase Obg from Staphylococcus aureus (strain MRSA252).